We begin with the raw amino-acid sequence, 323 residues long: tRNA U34 carboxymethyltransferase (323 aa).

Carboxy-S-adenosyl-L-methionine is bound by residues Lys-91, Trp-105, Lys-110, Gly-130, Asp-152–Thr-154, Ile-181–Glu-182, Met-196, Tyr-200, and Arg-315.

This sequence belongs to the class I-like SAM-binding methyltransferase superfamily. CmoB family. In terms of assembly, homotetramer.

The enzyme catalyses carboxy-S-adenosyl-L-methionine + 5-hydroxyuridine(34) in tRNA = 5-carboxymethoxyuridine(34) in tRNA + S-adenosyl-L-homocysteine + H(+). Its function is as follows. Catalyzes carboxymethyl transfer from carboxy-S-adenosyl-L-methionine (Cx-SAM) to 5-hydroxyuridine (ho5U) to form 5-carboxymethoxyuridine (cmo5U) at position 34 in tRNAs. This Shigella boydii serotype 18 (strain CDC 3083-94 / BS512) protein is tRNA U34 carboxymethyltransferase.